Reading from the N-terminus, the 235-residue chain is Probable septum site-determining protein MinC (235 aa).

The disordered stretch occupies residues 104-125 (KAVRPAPVEPATPSEPPQNANP). Residues 110-119 (PVEPATPSEP) show a composition bias toward pro residues.

Belongs to the MinC family. Interacts with MinD and FtsZ.

In terms of biological role, cell division inhibitor that blocks the formation of polar Z ring septums. Rapidly oscillates between the poles of the cell to destabilize FtsZ filaments that have formed before they mature into polar Z rings. Prevents FtsZ polymerization. This chain is Probable septum site-determining protein MinC, found in Salmonella enteritidis PT4 (strain P125109).